The following is a 231-amino-acid chain: Ribonuclease 3 (231 aa).

Residues 5–134 enclose the RNase III domain; sequence QEKLKNDYGL…FLGALFIDQG (130 aa). Glu47 contacts Mg(2+). Residue Asp51 is part of the active site. Residues Asn120 and Glu123 each coordinate Mg(2+). The active site involves Glu123. The DRBM domain occupies 160–229; it reads DYKTELQEVL…AENAIKGQNH (70 aa).

This sequence belongs to the ribonuclease III family. As to quaternary structure, homodimer. Requires Mg(2+) as cofactor.

It localises to the cytoplasm. The enzyme catalyses Endonucleolytic cleavage to 5'-phosphomonoester.. Digests double-stranded RNA. Involved in the processing of primary rRNA transcript to yield the immediate precursors to the large and small rRNAs (23S and 16S). Processes some mRNAs, and tRNAs when they are encoded in the rRNA operon. Processes pre-crRNA and tracrRNA of type II CRISPR loci if present in the organism. The polypeptide is Ribonuclease 3 (Lactococcus lactis subsp. cremoris (strain SK11)).